A 206-amino-acid chain; its full sequence is Transmembrane emp24 domain-containing protein bai (206 aa).

The N-terminal stretch at 1-20 (MARAALIVCLLMACAWSSHA) is a signal peptide. Residues 21 to 172 (VMFKLSPNTQ…RDTNEKTNSR (152 aa)) are Lumenal-facing. The GOLD domain occupies 30–140 (QKCLKEDIQA…LKPLEVDLKR (111 aa)). The chain crosses the membrane as a helical span at residues 173 to 193 (VLFFSIFSMCCLLGLATWQVL). At 194–206 (YLRRYFKAKKLIE) the chain is on the cytoplasmic side.

It belongs to the EMP24/GP25L family.

The protein localises to the membrane. In terms of biological role, eca and bai are essential, though not redundant, for dorsoventral patterning of the embryo. Specifically required during early embryogenesis for the activity of maternal tkv, while the zygotic tkv is not affected. This Drosophila erecta (Fruit fly) protein is Transmembrane emp24 domain-containing protein bai.